An 85-amino-acid chain; its full sequence is UPF0213 protein NP_0776A (85 aa).

The GIY-YIG domain occupies Ala-3–Arg-78. A compositionally biased stretch (basic and acidic residues) spans Lys-58–Ser-70. The interval Lys-58 to Gly-85 is disordered.

It belongs to the UPF0213 family.

The sequence is that of UPF0213 protein NP_0776A from Natronomonas pharaonis (strain ATCC 35678 / DSM 2160 / CIP 103997 / JCM 8858 / NBRC 14720 / NCIMB 2260 / Gabara) (Halobacterium pharaonis).